Consider the following 369-residue polypeptide: uncharacterized protein (369 aa).

The protein belongs to the Gfo/Idh/MocA family.

This is an uncharacterized protein from Schizosaccharomyces pombe (strain 972 / ATCC 24843) (Fission yeast).